Consider the following 536-residue polypeptide: DNA damage-binding protein CMR1 (536 aa).

Residues 36 to 45 are compositionally biased toward basic and acidic residues; sequence REAGVDDTHR. Residues 36–72 form a disordered region; that stretch reads REAGVDDTHRTVVKKKKSPSVSRGRSASPKVAPVATR. WD repeat units follow at residues 195–236, 251–291, 346–386, 403–442, 456–495, and 496–535; these read LVYE…LSEN, FFTK…SNDI, LSDK…KKPE, DSRLSVSAVSYSPTDNTLVCNGYDDTIRLFDVGSDNLPDD, GRWTSILKARFKQDQDVFAIANMKRAIDIYDSQGQQLAHL, and PTATVPAVISWHPLRNWIAGGNSSGKIFLFTDETVKKEEE.

Belongs to the WD repeat DDB2/WDR76 family.

DNA-binding protein that binds to both single- and double-stranded DNA. Binds preferentially to UV-damaged DNA. May be involved in DNA-metabolic processes. In Vanderwaltozyma polyspora (strain ATCC 22028 / DSM 70294 / BCRC 21397 / CBS 2163 / NBRC 10782 / NRRL Y-8283 / UCD 57-17) (Kluyveromyces polysporus), this protein is DNA damage-binding protein CMR1.